A 435-amino-acid polypeptide reads, in one-letter code: Glutamate-1-semialdehyde 2,1-aminomutase (435 aa).

Lys266 carries the N6-(pyridoxal phosphate)lysine modification.

This sequence belongs to the class-III pyridoxal-phosphate-dependent aminotransferase family. HemL subfamily. Homodimer. Pyridoxal 5'-phosphate is required as a cofactor.

It is found in the cytoplasm. The catalysed reaction is (S)-4-amino-5-oxopentanoate = 5-aminolevulinate. It functions in the pathway porphyrin-containing compound metabolism; protoporphyrin-IX biosynthesis; 5-aminolevulinate from L-glutamyl-tRNA(Glu): step 2/2. The sequence is that of Glutamate-1-semialdehyde 2,1-aminomutase from Coxiella burnetii (strain RSA 331 / Henzerling II).